The chain runs to 762 residues: 5-methyltetrahydropteroyltriglutamate--homocysteine methyltransferase (762 aa).

Residues 16–19 (RELK) and K118 contribute to the 5-methyltetrahydropteroyltri-L-glutamate site. L-homocysteine contacts are provided by residues 439 to 441 (IGS) and E492. Residues 439-441 (IGS) and E492 each bind L-methionine. 5-methyltetrahydropteroyltri-L-glutamate is bound by residues 523 to 524 (RC) and W569. D607 is a binding site for L-homocysteine. Residue D607 coordinates L-methionine. Position 613 (E613) interacts with 5-methyltetrahydropteroyltri-L-glutamate. 3 residues coordinate Zn(2+): H649, C651, and E673. The active-site Proton donor is H702. C734 is a binding site for Zn(2+).

The protein belongs to the vitamin-B12 independent methionine synthase family. The cofactor is Zn(2+).

It catalyses the reaction 5-methyltetrahydropteroyltri-L-glutamate + L-homocysteine = tetrahydropteroyltri-L-glutamate + L-methionine. The protein operates within amino-acid biosynthesis; L-methionine biosynthesis via de novo pathway; L-methionine from L-homocysteine (MetE route): step 1/1. Catalyzes the transfer of a methyl group from 5-methyltetrahydrofolate to homocysteine resulting in methionine formation. This is 5-methyltetrahydropteroyltriglutamate--homocysteine methyltransferase from Pseudomonas entomophila (strain L48).